A 375-amino-acid chain; its full sequence is Matrix protein (375 aa).

It belongs to the morbillivirus/respirovirus/rubulavirus M protein family.

The protein localises to the virion. The M protein has a crucial role in virus assembly and interacts with the RNP complex as well as with the viral membrane. The sequence is that of Matrix protein (M) from Homo sapiens (Human).